A 143-amino-acid polypeptide reads, in one-letter code: Cofilin (143 aa).

Residues 5–137 (GVAVADESLT…AYESVLEKVS (133 aa)) form the ADF-H domain.

Belongs to the actin-binding proteins ADF family.

It localises to the cytoplasm. It is found in the cytoskeleton. The protein localises to the nucleus matrix. Controls reversibly actin polymerization and depolymerization in a pH-sensitive manner. It has the ability to bind G- and F-actin in a 1:1 ratio of cofilin to actin. Binding to F-actin is regulated by tropomyosin. It is the major component of intranuclear and cytoplasmic actin rods. Required for accumulation of actin at the cell division site via depolymerizing actin at the cell ends. In association with myosin II has a role in the assembly of the contractile ring via severing actin filaments. Involved in the maintenance of the contractile ring once formed. In association with profilin and capping protein, has a role in the mitotic reorganization of the actin cytoskeleton. The polypeptide is Cofilin (COF1) (Eremothecium gossypii (strain ATCC 10895 / CBS 109.51 / FGSC 9923 / NRRL Y-1056) (Yeast)).